The primary structure comprises 393 residues: NAD(P)H-quinone oxidoreductase subunit H, chloroplastic (393 aa).

It belongs to the complex I 49 kDa subunit family. As to quaternary structure, NDH is composed of at least 16 different subunits, 5 of which are encoded in the nucleus.

It localises to the plastid. The protein resides in the chloroplast thylakoid membrane. It carries out the reaction a plastoquinone + NADH + (n+1) H(+)(in) = a plastoquinol + NAD(+) + n H(+)(out). The enzyme catalyses a plastoquinone + NADPH + (n+1) H(+)(in) = a plastoquinol + NADP(+) + n H(+)(out). Its function is as follows. NDH shuttles electrons from NAD(P)H:plastoquinone, via FMN and iron-sulfur (Fe-S) centers, to quinones in the photosynthetic chain and possibly in a chloroplast respiratory chain. The immediate electron acceptor for the enzyme in this species is believed to be plastoquinone. Couples the redox reaction to proton translocation, and thus conserves the redox energy in a proton gradient. In Helianthus annuus (Common sunflower), this protein is NAD(P)H-quinone oxidoreductase subunit H, chloroplastic.